The sequence spans 338 residues: Diacylglycerol acyltransferase/mycolyltransferase Ag85A (338 aa).

An N-terminal signal peptide occupies residues 1 to 42 (MQLVDRVRGAVTGMSRRLVVGAVGAALVSGLVGAVGGTATAG). 85 to 86 (LR) contacts substrate. The segment at 101–111 (FEWYDQSGLSV) is fibronectin-binding. A disulfide bond links cysteine 130 and cysteine 135. Serine 169 and aspartate 197 together coordinate substrate. Serine 169 (nucleophile) is an active-site residue. Glutamate 273 is an active-site residue. Substrate-binding positions include 275–278 (FVRT), lysine 282, and 305–307 (HSW). Residue histidine 305 is part of the active site.

This sequence belongs to the mycobacterial A85 antigen family. Homodimer.

Its subcellular location is the secreted. It localises to the cell wall. The protein localises to the cytoplasm. The enzyme catalyses an acyl-CoA + a 1,2-diacyl-sn-glycerol = a triacyl-sn-glycerol + CoA. It carries out the reaction 2 alpha,alpha'-trehalose 6-mycolate = alpha,alpha'-trehalose 6,6'-bismycolate + alpha,alpha-trehalose. The antigen 85 proteins (FbpA, FbpB, FbpC) are responsible for the high affinity of mycobacteria for fibronectin, a large adhesive glycoprotein, which facilitates the attachment of M.tuberculosis to murine alveolar macrophages (AMs). They also help to maintain the integrity of the cell wall by catalyzing the transfer of mycolic acids to cell wall arabinogalactan, and through the synthesis of alpha,alpha-trehalose dimycolate (TDM, cord factor). They catalyze the transfer of a mycoloyl residue from one molecule of alpha,alpha-trehalose monomycolate (TMM) to another TMM, leading to the formation of TDM. FbpA mediates triacylglycerol (TAG) formation with long-chain acyl-CoA as the acyl donor and 1,2-dipalmitoyl-sn-glycerol (1,2-dipalmitin) as the acyl acceptor. It has a preference for C26:0-CoA over C18:1-CoA. This Mycobacterium bovis (strain ATCC BAA-935 / AF2122/97) protein is Diacylglycerol acyltransferase/mycolyltransferase Ag85A (fbpA).